The chain runs to 333 residues: Ornithine carbamoyltransferase (333 aa).

Carbamoyl phosphate is bound by residues 57–60 (STRT), Arg108, and 135–138 (HPTQ). Residues Asn168, Asp232, and 236 to 237 (SM) contribute to the L-ornithine site. Carbamoyl phosphate is bound by residues 274 to 275 (CL) and Arg319.

It belongs to the aspartate/ornithine carbamoyltransferase superfamily. OTCase family.

Its subcellular location is the cytoplasm. It catalyses the reaction carbamoyl phosphate + L-ornithine = L-citrulline + phosphate + H(+). It participates in amino-acid degradation; L-arginine degradation via ADI pathway; carbamoyl phosphate from L-arginine: step 2/2. Reversibly catalyzes the transfer of the carbamoyl group from carbamoyl phosphate (CP) to the N(epsilon) atom of ornithine (ORN) to produce L-citrulline. The sequence is that of Ornithine carbamoyltransferase from Pediococcus pentosaceus (strain ATCC 25745 / CCUG 21536 / LMG 10740 / 183-1w).